We begin with the raw amino-acid sequence, 854 residues long: MALEQALQAARQGELDVLRSLHAAGLLGPSLRDPLDALPVHHAARAGKLHCLRFLVEEAALPAAARARNGATPAHDASATGHLACLQWLLSQGGCRVQDKDNSGATVLHLAARFGHPEVVNWLLHHGGGDPTAATDMGALPIHYAAAKGDFPSLRLLVEHYPEGVNAQTKNGATPLYLACQEGHLEVTQYLVQECGADPHARAHDGMTPLHAAAQMGHSPVIVWLVSCTDVSLSEQDKDGATAMHFAASRGHTKVLSWLLLHGGEISADLWGGTPLHDAAENGELECCQILVVNGAELDVRDRDGYTAADLSDFNGHSHCTRYLRTVENLSVEHRVLSRDPSAELEAKQPDSGMSSPNTTVSVQPLNFDLSSPTSTLSNYDSCSSSHSSIKGQHPPCGLSSARAADIQSYMDMLNPELGLPRGTIGKPTPPPPPPSFPPPPPPPGTQLPPPPPGYPAPKPPVGPQAADIYMQTKNKLRHVETEALKKELSSCDGHDGLRRQDSSRKPRAFSKQPSTGDYYRQLGRCPGETLAARPGMAHSEEVRARQPARAGCPRLGPAARGSLEGPSAPPQAALLPGNHVPNGCAADPKASRELPPPPPPPPPPLPEAASSPPPAPPLPLESAGPGCGQRRSSSSTGSTKSFNMMSPTGDNSELLAEIKAGKSLKPTPQSKGLTTVFSGIGQPAFQPDSPLPSVSPALSPVRSPTPPAAGFQPLLNGSLVPVPPTTPAPGVQLDVEALIPTHDEQGRPIPEWKRQVMVRKMQLKMQEEEEQRRKEEEEEARLASMPAWRRDLLRKKLEEEREQKRKEEERQKQEELRREKEQSEKLRTLGYDESKLAPWQRQVILKKGDIAKY.

9 ANK repeats span residues M1–L31, L35–A64, N69–D99, S103–A133, M137–A167, N171–A201, D205–E235, D239–A268, and W271–V300. S338 and S342 each carry phosphoserine. Positions S338–Q349 are enriched in basic and acidic residues. 5 disordered regions span residues S338–S400, N415–K474, K487–Q713, K765–A788, and E800–Y832. Over residues S352–L377 the composition is skewed to polar residues. Residues S378–S389 are compositionally biased toward low complexity. The segment covering P428–G463 has biased composition (pro residues). Residues K487–R505 show a composition bias toward basic and acidic residues. A Phosphoserine modification is found at S515. A compositionally biased stretch (pro residues) spans L595 to P620. Residues S633–S642 show a composition bias toward low complexity. Polar residues-rich tracts occupy residues F643 to N652 and P667 to F678. Phosphoserine is present on S647. In terms of domain architecture, WH2 spans D651–T668. S690 and S696 each carry phosphoserine. Residues L692–R703 show a composition bias toward low complexity. The stretch at Q756–L830 forms a coiled coil.

As to quaternary structure, monomer. Binds F-actin in a Ca(2+)-resistant fashion. Interacts (via N-terminus) with BAIAP2 (via SH3-domain). Interacts with PFN2. Interacts with MYO3A (via C-terminus). Interacts with MYO3B (via C-terminus).

The protein localises to the cytoplasm. It localises to the cytoskeleton. Its subcellular location is the cell projection. It is found in the stereocilium. The protein resides in the microvillus. In terms of biological role, multifunctional actin-bundling protein. Plays a major role in regulating the organization, dimension, dynamics and signaling capacities of the actin filament-rich microvilli in the mechanosensory and chemosensory cells. Required for the assembly and stabilization of the stereociliary parallel actin bundles. Plays a crucial role in the formation and maintenance of inner ear hair cell stereocilia. Involved in the elongation of actin in stereocilia. In extrastriolar hair cells, required for targeting MYO3B to stereocilia tips, and for regulation of stereocilia diameter and staircase formation. In Homo sapiens (Human), this protein is Espin (ESPN).